The primary structure comprises 313 residues: Porphobilinogen deaminase (313 aa).

Cys242 carries the S-(dipyrrolylmethanemethyl)cysteine modification.

The protein belongs to the HMBS family. Monomer. The cofactor is dipyrromethane.

The enzyme catalyses 4 porphobilinogen + H2O = hydroxymethylbilane + 4 NH4(+). The protein operates within porphyrin-containing compound metabolism; protoporphyrin-IX biosynthesis; coproporphyrinogen-III from 5-aminolevulinate: step 2/4. Tetrapolymerization of the monopyrrole PBG into the hydroxymethylbilane pre-uroporphyrinogen in several discrete steps. The chain is Porphobilinogen deaminase from Enterobacter sp. (strain 638).